The following is a 689-amino-acid chain: DNA ligase (689 aa).

NAD(+) contacts are provided by residues 40-44, 89-90, and Glu-121; these read DAEYD and SL. Lys-123 serves as the catalytic N6-AMP-lysine intermediate. The NAD(+) site is built by Arg-144, Glu-179, Lys-295, and Lys-319. Zn(2+)-binding residues include Cys-413, Cys-416, Cys-431, and Cys-437. The BRCT domain maps to 610-689; sequence RAQSSLTGKI…EEWLTLIKNA (80 aa).

The protein belongs to the NAD-dependent DNA ligase family. LigA subfamily. Mg(2+) is required as a cofactor. Requires Mn(2+) as cofactor.

The enzyme catalyses NAD(+) + (deoxyribonucleotide)n-3'-hydroxyl + 5'-phospho-(deoxyribonucleotide)m = (deoxyribonucleotide)n+m + AMP + beta-nicotinamide D-nucleotide.. Functionally, DNA ligase that catalyzes the formation of phosphodiester linkages between 5'-phosphoryl and 3'-hydroxyl groups in double-stranded DNA using NAD as a coenzyme and as the energy source for the reaction. It is essential for DNA replication and repair of damaged DNA. This is DNA ligase from Rickettsia akari (strain Hartford).